A 222-amino-acid polypeptide reads, in one-letter code: Thymidylate kinase (222 aa).

Residues 29-34 and R111 contribute to the ATP site; that span reads RVGKST. Residues 146–170 form an LID region; that stretch reads LSMSSEDATKRGEYGGERYEKLEFQ.

The protein belongs to the thymidylate kinase family. Homodimer. Mg(2+) serves as cofactor.

It catalyses the reaction dTMP + ATP = dTDP + ADP. It participates in pyrimidine metabolism; dTTP biosynthesis. Functionally, catalyzes the phosphorylation of thymidine monophosphate (dTMP) to thymidine diphosphate (dTDP), the immediate precursor for the DNA building block dTTP, with ATP as the preferred phosphoryl donor in the presence of Mg(2+). The chain is Thymidylate kinase (dtymk) from Dictyostelium discoideum (Social amoeba).